The primary structure comprises 231 residues: uncharacterized protein (231 aa).

The helical transmembrane segment at 86-106 threads the bilayer; sequence LIILFVIGLIITIIGLLMYEP.

The protein resides in the membrane. This is an uncharacterized protein from Methanocaldococcus jannaschii (strain ATCC 43067 / DSM 2661 / JAL-1 / JCM 10045 / NBRC 100440) (Methanococcus jannaschii).